Here is a 390-residue protein sequence, read N- to C-terminus: MKLHTLVMFTLVIGSPLLPQHRCYRNSQTFQLVHTLNKFVGRRRRALKPTLHANPPSEHLQNLKYVREVTNASIQICNDALKECKGDVEKAIELVRRSAKNSSFVSTSVKVKTEGLVGSQVGGDQVVMLEVLTDSDFVARNEKFVRFVRTLLGAALAGGAAHGGAVTGEGSGATALLSLPYDEQSGGSHSGGPHIAHSTTTVGEQMNYLRNIFREDVRIGRFARYERKNANQFLHCYIHNRVEENIGTSGVLLVLTIDELSEKLKSQGECIAEVANDMALHILSAKPVSVSVSDLPEQVVKREVAIIRESLRGVKKPEGILDSMVNGKMRKFYSSVVLLEQEYMLDDTKRKVSQVIRDFCKKHNLNISVRHFDTFIVGEKNILREGPMGG.

This sequence belongs to the EF-Ts family.

Its subcellular location is the mitochondrion. Associates with the EF-Tu.GDP complex and induces the exchange of GDP to GTP. It remains bound to the aminoacyl-tRNA.EF-Tu.GTP complex up to the GTP hydrolysis stage on the ribosome. This is Elongation factor Ts, mitochondrial from Plasmodium vivax (strain Salvador I).